The chain runs to 273 residues: MDRNIVRVSREDPQRSSTDIQMVVKTPNEVTPSLRTVRRRLQDAGLHGRRPAKKPSISKKNRIARVAWARAHLHWGRQDWANHVFSDESKFNLFGTDGIKWIRRPVGCRFDPSYQLQTVKHGGGSVMVWGCFSGTSMDPLRRIDSIMDRFVYEDILENTMRPWARSTVGRAFVFQQDNDPKHTSKHIKEWFRRRHVDLLDWPSQSPDLNPIEHLWEHVERHVRGVRASNANQKFDQLQDVWQAIPMSVIDTILDSMPRRCQTVIDAKGFPTKY.

This sequence belongs to the transposase 5 family.

The protein resides in the nucleus. In terms of biological role, probably essential for transposable element Tcb2 transposition. The chain is Transposable element Tcb2 transposase from Caenorhabditis briggsae.